The sequence spans 313 residues: Methylenetetrahydrofolate dehydrogenase [NAD(+)] (313 aa).

C152 is an active-site residue. Residues 187–188 (RS), 210–211 (DI), and 270–272 (FAG) each bind NAD(+).

It belongs to the tetrahydrofolate dehydrogenase/cyclohydrolase family. Homodimer.

It catalyses the reaction (6R)-5,10-methylene-5,6,7,8-tetrahydrofolate + NAD(+) = (6R)-5,10-methenyltetrahydrofolate + NADH. The protein operates within one-carbon metabolism; tetrahydrofolate interconversion. Its function is as follows. Catalyzes oxidation of cytoplasmic one-carbon units for purine biosynthesis. The sequence is that of Methylenetetrahydrofolate dehydrogenase [NAD(+)] (thfA) from Dictyostelium discoideum (Social amoeba).